The following is a 297-amino-acid chain: uncharacterized protein (297 aa).

2 helical membrane passes run 17 to 37 (LALS…KEIF) and 48 to 68 (TISG…GYSI). Residues 17-196 (LALSGGGFYG…TLNYPITLFD (180 aa)) form the PNPLA domain. Positions 21 to 26 (GGGFYG) match the GXGXXG motif. The GXSXG signature appears at 51 to 55 (GVSVG). Serine 53 (nucleophile) is an active-site residue. A glycan (N-linked (GlcNAc...) asparagine; by host) is linked at asparagine 122. The Proton acceptor role is filled by aspartate 183. Positions 183 to 185 (DGG) match the DGA/G motif. A glycan (N-linked (GlcNAc...) asparagine; by host) is linked at asparagine 239.

Its subcellular location is the membrane. In terms of biological role, probable lipid hydrolase. This is an uncharacterized protein from Acanthamoeba polyphaga mimivirus (APMV).